A 540-amino-acid polypeptide reads, in one-letter code: Putative cysteine ligase BshC (540 aa).

The stretch at 457 to 477 forms a coiled coil; that stretch reads EKNRAFIQGQIAFLKERMERE.

This sequence belongs to the BshC family.

Its function is as follows. Involved in bacillithiol (BSH) biosynthesis. May catalyze the last step of the pathway, the addition of cysteine to glucosamine malate (GlcN-Mal) to generate BSH. This is Putative cysteine ligase BshC from Shouchella clausii (strain KSM-K16) (Alkalihalobacillus clausii).